The sequence spans 337 residues: Phospholipase A1 1 (337 aa).

An N-terminal signal peptide occupies residues 1–21; it reads MNFKYSILFICFVKVLDNCYA. Positions 22–35 are excised as a propeptide; the sequence is ADDLTTLRNGTLDR. Residues cysteine 41 and cysteine 124 are joined by a disulfide bond. Catalysis depends on serine 174, which acts as the Nucleophile. Catalysis depends on aspartate 202, which acts as the Charge relay system. Disulfide bonds link cysteine 213/cysteine 218 and cysteine 256/cysteine 261. Histidine 263 (charge relay system) is an active-site residue. 3 cysteine pairs are disulfide-bonded: cysteine 278–cysteine 305, cysteine 279–cysteine 330, and cysteine 298–cysteine 303.

It belongs to the AB hydrolase superfamily. Lipase family. In terms of tissue distribution, expressed by the venom gland.

It is found in the secreted. The catalysed reaction is a 1,2-diacyl-sn-glycero-3-phosphocholine + H2O = a 2-acyl-sn-glycero-3-phosphocholine + a fatty acid + H(+). Catalyzes the hydrolysis of phosphatidylcholine with phospholipase A1 activity. May act as an allergen and induce hemolytic activity. This Polistes dominula (European paper wasp) protein is Phospholipase A1 1.